Reading from the N-terminus, the 359-residue chain is Protein mab-21-like 2 (359 aa).

The protein belongs to the mab-21 family.

The protein resides in the nucleus. It localises to the cytoplasm. Its function is as follows. Required for several aspects of embryonic development including normal development of the eye. The protein is Protein mab-21-like 2 (mab21l2) of Xenopus tropicalis (Western clawed frog).